The following is a 205-amino-acid chain: Golgi apparatus membrane protein TVP23 homolog B (205 aa).

Residue M1 is modified to N-acetylmethionine. The span at 1 to 21 (MLSQDSNDDTEDVSLFDAEEE) shows a compositional bias: acidic residues. Residues 1–27 (MLSQDSNDDTEDVSLFDAEEETTNRPR) are disordered. 4 helical membrane-spanning segments follow: residues 34–53 (PVASFFHLFFRVSAVVVYLL), 54–72 (CELLSSSFIACMVTIILLL), 126–146 (IFWLGLIACPVLWVIFAFSAL), and 152–172 (KWLAVVIMGVVLQGANLYGYI).

Belongs to the TVP23 family.

Its subcellular location is the membrane. The chain is Golgi apparatus membrane protein TVP23 homolog B (Tvp23b) from Mus musculus (Mouse).